The sequence spans 329 residues: GTPase Obg (329 aa).

One can recognise an Obg domain in the interval 1-159 (MQFIDQACIS…WLLHLELKLL (159 aa)). Positions 160-328 (AEVGIIGLPN…LLKNVWEKLE (169 aa)) constitute an OBG-type G domain. ATP contacts are provided by residues 166-173 (GLPNAGKS), 191-195 (FTTLI), 213-216 (DIPG), 280-283 (NKKE), and 309-311 (SAA). Residues Ser173 and Thr193 each contribute to the Mg(2+) site.

It belongs to the TRAFAC class OBG-HflX-like GTPase superfamily. OBG GTPase family. Monomer. It depends on Mg(2+) as a cofactor.

It localises to the cytoplasm. Functionally, an essential GTPase which binds GTP, GDP and possibly (p)ppGpp with moderate affinity, with high nucleotide exchange rates and a fairly low GTP hydrolysis rate. Plays a role in control of the cell cycle, stress response, ribosome biogenesis and in those bacteria that undergo differentiation, in morphogenesis control. This chain is GTPase Obg, found in Prochlorococcus marinus (strain MIT 9211).